The sequence spans 321 residues: uncharacterized protein (321 aa).

The protein belongs to the NAD(P)-dependent epimerase/dehydratase family.

This is an uncharacterized protein from Staphylococcus aureus (strain bovine RF122 / ET3-1).